The following is a 414-amino-acid chain: Zinc metalloproteinase-disintegrin-like batroxstatin-3 (414 aa).

N-linked (GlcNAc...) asparagine glycosylation is found at Asn7 and Asn70. The Peptidase M12B domain occupies 10–204 (KYIKLVIVAD…HTPQCILNEP (195 aa)). 3 cysteine pairs are disulfide-bonded: Cys121/Cys199, Cys161/Cys183, and Cys163/Cys168. His146 provides a ligand contact to Zn(2+). Glu147 is a catalytic residue. Residues His150 and His156 each coordinate Zn(2+). A Disintegrin domain is found at 212 to 298 (PEVCGNYLLE…HCPTDRFHRN (87 aa)). The Ca(2+) site is built by Val214, Asn217, Glu221, Glu224, and Asp227. Cystine bridges form between Cys215–Cys244, Cys226–Cys239, Cys228–Cys234, Cys238–Cys261, Cys252–Cys258, Cys257–Cys283, Cys270–Cys290, Cys277–Cys309, Cys302–Cys314, Cys321–Cys371, Cys336–Cys381, Cys349–Cys359, Cys366–Cys403, and Cys397–Cys408. Residues 276–278 (ECD) carry the D/ECD-tripeptide motif. The Ca(2+) site is built by Asp278, Glu281, Asp293, and Arg294.

Belongs to the venom metalloproteinase (M12B) family. P-III subfamily. P-IIIa sub-subfamily. As to quaternary structure, monomer. The cofactor is Zn(2+). As to expression, expressed by the venom gland.

Its subcellular location is the secreted. Functionally, snake venom zinc metalloprotease that induces apoptosis in vascular endothelial cells (VEC), without degrading the extracellular matrix (it cannot cleave collagen) or inhibiting adhesion of VEC. Has also fibrinogenolytic and hemorrhagic activities. The chain is Zinc metalloproteinase-disintegrin-like batroxstatin-3 from Bothrops atrox (Barba amarilla).